The primary structure comprises 184 residues: MLELGIFSSNTQNIGQSISERFAGIFPSWPIMLATLVSFTILLVVLTKLIYKPVKKMMKNRRDFIQNNIDESTKQVEKSNELLEKSNIEILDAKIKANTIIKDAQILAEEIKNNSIKDAKDKSKQLLEETKIYIRQQKVLFAKESKKEIVEIAGEMTKKILSESDVKLEDSKFLENLLKNDITK.

A helical membrane pass occupies residues 25-45 (IFPSWPIMLATLVSFTILLVV).

Belongs to the ATPase B chain family. In terms of assembly, F-type ATPases have 2 components, F(1) - the catalytic core - and F(0) - the membrane proton channel. F(1) has five subunits: alpha(3), beta(3), gamma(1), delta(1), epsilon(1). F(0) has three main subunits: a(1), b(2) and c(10-14). The alpha and beta chains form an alternating ring which encloses part of the gamma chain. F(1) is attached to F(0) by a central stalk formed by the gamma and epsilon chains, while a peripheral stalk is formed by the delta and b chains.

The protein localises to the cell membrane. F(1)F(0) ATP synthase produces ATP from ADP in the presence of a proton or sodium gradient. F-type ATPases consist of two structural domains, F(1) containing the extramembraneous catalytic core and F(0) containing the membrane proton channel, linked together by a central stalk and a peripheral stalk. During catalysis, ATP synthesis in the catalytic domain of F(1) is coupled via a rotary mechanism of the central stalk subunits to proton translocation. Functionally, component of the F(0) channel, it forms part of the peripheral stalk, linking F(1) to F(0). The chain is ATP synthase subunit b from Mycoplasma mobile (strain ATCC 43663 / 163K / NCTC 11711) (Mesomycoplasma mobile).